The sequence spans 556 residues: tRNA (guanine(37)-N(1))-methyltransferase (556 aa).

Residues 1 to 30 constitute a mitochondrion transit peptide; sequence MIITTKALTVLPHSGLRTTHRSLLARLRHY. Residues His-249, 287-288, 315-316, and Asn-346 contribute to the S-adenosyl-L-methionine site; these read DL and DA. Disordered regions lie at residues 444-465 and 524-556; these read QHEE…KMKD and KKAA…EMQM. Composition is skewed to basic and acidic residues over residues 454 to 465 and 540 to 549; these read EEAKRPSNKMKD and SKPDTKKIEA.

This sequence belongs to the class I-like SAM-binding methyltransferase superfamily. TRM5/TYW2 family. Monomer.

It localises to the mitochondrion matrix. The protein resides in the nucleus. The protein localises to the cytoplasm. It catalyses the reaction guanosine(37) in tRNA + S-adenosyl-L-methionine = N(1)-methylguanosine(37) in tRNA + S-adenosyl-L-homocysteine + H(+). Its function is as follows. Specifically methylates the N1 position of guanosine-37 in various cytoplasmic and mitochondrial tRNAs. Methylation is not dependent on the nature of the nucleoside 5' of the target nucleoside. This is the first step in the biosynthesis of wybutosine (yW), a modified base adjacent to the anticodon of tRNAs and required for accurate decoding. The chain is tRNA (guanine(37)-N(1))-methyltransferase from Anopheles gambiae (African malaria mosquito).